The primary structure comprises 342 residues: Predicted GPI-anchored protein 54 (342 aa).

Residues 1–16 (MRANYLLLLAATAVQA) form the signal peptide. N-linked (GlcNAc...) asparagine glycans are attached at residues Asn25, Asn105, and Asn151. Gly314 carries the GPI-anchor amidated glycine lipid modification. The propeptide at 315–342 (ASQSHPISSYSNYTISDYAPPISSYYSL) is removed in mature form. N-linked (GlcNAc...) asparagine glycosylation occurs at Asn326.

It is found in the cell membrane. The sequence is that of Predicted GPI-anchored protein 54 (PGA54) from Candida albicans (strain SC5314 / ATCC MYA-2876) (Yeast).